Here is a 303-residue protein sequence, read N- to C-terminus: Thioesterase poxG (303 aa).

It belongs to the lcsJ thioesterase family.

The protein operates within secondary metabolite biosynthesis. Functionally, thioesterase; part of the gene cluster that mediates the biosynthesis of oxaleimides, cytotoxic compounds containing an unusual disubstituted succinimide moiety. The first step of the pathway is provided by the HR-PKS poxF that serves in a new mode of collaborative biosynthesis with the PKS-NRPS poxE, by providing the olefin containing amino acid substrate via the synthesis of an ACP-bound dec-4-enoate. The cytochrome P450 monooxygenase poxM-catalyzed oxidation at the alpha-position creates the enzyme-bound 2-hydroxydec-4-enoyl-ACP thioester, which may be prone to spontaneous hydrolysis to yield 2-hydroxydec-4-enoic acid due to increased electrophilicity of the carbonyl. 2-hydroxydec-4-enoic acid can then be further oxidized by poxM to yield the alpha-ketoacid 2-oxodec-4-enoicacid, which is reductively aminated by the aminotransferase poxL to yield (S,E)-2-aminodec-4-enoic acid. The Hybrid PKS-NRPS synthetase poxE then performs condensation between the octaketide product of its PKS modules and the amino group of (S,E)-2-aminodec-4-enoic acid which is activated and incorporated by the adenylation domain. The resulting aminoacyl product can be cyclized by the Diels-Alderase PoxQ and reductively released by the reductive (R) domain of poxE to yield an aldehyde intermediate. The released aldehyde is then substrate for a Knoevenagel condensation by the hydrolyase poxO followed by an oxidation at the 5-position of the pyrrolidone ring. The presence of the olefin from the amino acid building block allows for migration of the substituted allyl group to occur. This allylic transposition reaction takes place in a conjugate addition, semipinacol-like fashion to yield a succinimide intermediate. Iterative two-electron oxidations of the C7 methyl of the succinimide intermediate to the carboxylic acid can be catalyzed by one of two remaining cytochrome P450 monooxygenasess poxC or poxD to yield oxaleimide A. Subsequent oxidation yields the maleimide scaffold oxaleimide I. Both oxaleimide A and oxaleimide I can undergo oxidative modifications in the decalin ring to yield the series of products oxaleimides B to H. The polypeptide is Thioesterase poxG (Penicillium oxalicum).